The chain runs to 409 residues: Peptidase T (409 aa).

Histidine 78 contacts Zn(2+). Aspartate 80 is an active-site residue. A Zn(2+)-binding site is contributed by aspartate 140. Glutamate 173 (proton acceptor) is an active-site residue. Glutamate 174, aspartate 196, and histidine 379 together coordinate Zn(2+).

This sequence belongs to the peptidase M20B family. Zn(2+) is required as a cofactor.

It localises to the cytoplasm. The enzyme catalyses Release of the N-terminal residue from a tripeptide.. Functionally, cleaves the N-terminal amino acid of tripeptides. In Salmonella agona (strain SL483), this protein is Peptidase T.